A 1133-amino-acid polypeptide reads, in one-letter code: ATP-dependent DNA helicase homolog MER3 (1133 aa).

Residues 34 to 229 form the Helicase ATP-binding domain; the sequence is PLCFHSDINM…WLKVPTAGIK (196 aa). 47–54 contributes to the ATP binding site; sequence APTGSGKT. The short motif at 165-168 is the DEVH box element; that stretch reads DEVH. Residues 263 to 460 enclose the Helicase C-terminal domain; it reads YIYDILMQYS…CLIEHLTAEI (198 aa). The region spanning 536–847 is the SEC63 domain; sequence EPGRLMTKYY…FEEYIGIDLH (312 aa). Residues 878 to 919 are disordered; that stretch reads ACIADDDNPVTSGPSNRKDKKDDMPSFKLIDDDSEEEKEPYV. Over residues 893–908 the composition is skewed to basic and acidic residues; sequence NRKDKKDDMPSFKLID. Over residues 909–919 the composition is skewed to acidic residues; it reads DDSEEEKEPYV.

Belongs to the helicase family. SKI2 subfamily. As to expression, expressed in meiocytes during meiosis.

It localises to the nucleus. It catalyses the reaction Couples ATP hydrolysis with the unwinding of duplex DNA by translocating in the 3'-5' direction.. It carries out the reaction ATP + H2O = ADP + phosphate + H(+). In terms of biological role, DNA helicase required for crossover formation, complete synapsis of homologous chromosomes and bivalent formation during meiosis. Is specific to recombination events resulting in interference-sensitive crossovers (class I meiotic crossover). This is ATP-dependent DNA helicase homolog MER3 from Arabidopsis thaliana (Mouse-ear cress).